A 279-amino-acid polypeptide reads, in one-letter code: MTKIKIVTDSSVTIEPELVKQLDITIVPLSVMIDNVVYSDADLKEEGKFLQLMQESKNLPKTSQPPVGVFAEIFEDLCKDGGQILAIHMSHALSGTVEAARQGASLSTADVTVVDSSFTDQALKFQVVEAAKLAQEGKDMEAILSHVEEVKNHTELYIGVSTLENLVKGGRISRVTGLLSSLLNIRAVMQMKDHELQPMVKGRGTKTFKKWLDELITSLSERAVAEIGISYSGSDDWAKEMKESLQAYVEKPISVLETGSIIQTHTGENAWAILIRYHS.

One can recognise a DegV domain in the interval 4-277; that stretch reads IKIVTDSSVT…ENAWAILIRY (274 aa). Hexadecanoate is bound by residues Thr62 and Ser94.

Its function is as follows. May bind long-chain fatty acids, such as palmitate, and may play a role in lipid transport or fatty acid metabolism. In Streptococcus pneumoniae serotype 4 (strain ATCC BAA-334 / TIGR4), this protein is DegV domain-containing protein SP_1112.